We begin with the raw amino-acid sequence, 326 residues long: Neuferricin homolog (326 aa).

The first 34 residues, 1 to 34, serve as a signal peptide directing secretion; that stretch reads MDKNRRRTDDAGLMTKTLAGIAALVFFLSFICSS. The Cytochrome b5 heme-binding domain occupies 98 to 197; the sequence is KHVFTPEQLH…KEYPLVGVVA (100 aa).

Belongs to the cytochrome b5 family. MAPR subfamily.

Its subcellular location is the secreted. Functionally, heme-binding protein. This is Neuferricin homolog (tag-131) from Caenorhabditis elegans.